Consider the following 478-residue polypeptide: Cytochrome c lysine N-methyltransferase 1 (478 aa).

Residues 32 to 284 enclose the SET domain; it reads PCVSIERSQI…DRFEVFISYC (253 aa). The interval 199-299 is SET-like; that stretch reads TRAVVLRVYA…VHFKHTYGFF (101 aa).

Belongs to the class V-like SAM-binding methyltransferase superfamily.

The protein resides in the cytoplasm. It localises to the cytosol. It carries out the reaction L-lysyl-[cytochrome c] + S-adenosyl-L-methionine = N(6)-methyl-L-lysyl-[cytochrome c] + S-adenosyl-L-homocysteine + H(+). In terms of biological role, methyltransferase which mediates trimethylation of cytochrome c (CYC1). This chain is Cytochrome c lysine N-methyltransferase 1 (CTM1), found in Eremothecium gossypii (strain ATCC 10895 / CBS 109.51 / FGSC 9923 / NRRL Y-1056) (Yeast).